A 178-amino-acid chain; its full sequence is ATP-dependent protease subunit HslV (178 aa).

Residue Thr7 is part of the active site. Na(+) is bound by residues Gly162, Cys165, and Thr168.

It belongs to the peptidase T1B family. HslV subfamily. A double ring-shaped homohexamer of HslV is capped on each side by a ring-shaped HslU homohexamer. The assembly of the HslU/HslV complex is dependent on binding of ATP.

Its subcellular location is the cytoplasm. It catalyses the reaction ATP-dependent cleavage of peptide bonds with broad specificity.. Its activity is regulated as follows. Allosterically activated by HslU binding. Functionally, protease subunit of a proteasome-like degradation complex believed to be a general protein degrading machinery. The chain is ATP-dependent protease subunit HslV from Burkholderia ambifaria (strain MC40-6).